Here is a 377-residue protein sequence, read N- to C-terminus: T-protein (377 aa).

The region spanning 1–92 is the Chorismate mutase domain; the sequence is MSFMEALKDL…ESYANENQFG (92 aa). The 264-residue stretch at 101–364 folds into the Prephenate/arogenate dehydrogenase domain; it reads HKIVIVGGYG…DYSEQFLKES (264 aa).

It in the C-terminal section; belongs to the prephenate/arogenate dehydrogenase family.

It localises to the cytoplasm. It catalyses the reaction chorismate = prephenate. It carries out the reaction prephenate + NAD(+) = 3-(4-hydroxyphenyl)pyruvate + CO2 + NADH. It functions in the pathway amino-acid biosynthesis; L-tyrosine biosynthesis; (4-hydroxyphenyl)pyruvate from prephenate (NAD(+) route): step 1/1. It participates in metabolic intermediate biosynthesis; prephenate biosynthesis; prephenate from chorismate: step 1/1. The protein is T-protein (tyrA) of Haemophilus influenzae (strain ATCC 51907 / DSM 11121 / KW20 / Rd).